We begin with the raw amino-acid sequence, 648 residues long: Acyl-CoA-binding domain-containing protein 5 (648 aa).

An ACB domain is found at 13–107; that stretch reads YPERFYAAAS…LEEADPGWYP (95 aa). An acyl-CoA contacts are provided by residues Lys34, 49-53, and Lys75; that span reads YTLHQ. 6 Kelch repeats span residues 196–244, 256–306, 307–357, 359–408, 409–457, and 464–509; these read KMYM…KLTH, QLLS…LVGK, SLVI…VHAE, YLLI…TIGE, NWYI…LVVS, and IVVA…AVNN. Ser517 carries the post-translational modification Phosphoserine. Positions 520 to 632 form a coiled coil; sequence KVEGKADRII…AATMNAKRQS (113 aa). Residues 625 to 634 are compositionally biased toward polar residues; it reads TMNAKRQSSG. Positions 625 to 648 are disordered; it reads TMNAKRQSSGGVWGWLAGTPPPKT.

It belongs to the ACBP family. Expressed in roots, stems, leaves, flowers and siliques.

It localises to the cytoplasm. Its function is as follows. Binds medium- and long-chain acyl-CoA esters with very high affinity. Can interact in vitro with oleoyl-CoA, barely with palmitoyl-CoA, but not with arachidonyl-CoA. May function as an intracellular carrier of acyl-CoA esters. This is Acyl-CoA-binding domain-containing protein 5 (ACBP5) from Arabidopsis thaliana (Mouse-ear cress).